Here is a 146-residue protein sequence, read N- to C-terminus: Hut operon positive regulatory protein (146 aa).

This sequence belongs to the HutP family. Homohexamer.

Its function is as follows. Antiterminator that binds to cis-acting regulatory sequences on the mRNA in the presence of histidine, thereby suppressing transcription termination and activating the hut operon for histidine utilization. In Bacillus cereus (strain AH820), this protein is Hut operon positive regulatory protein.